The sequence spans 155 residues: Ribosomal RNA large subunit methyltransferase H (155 aa).

S-adenosyl-L-methionine-binding positions include Leu73, Gly104, and 123–128 (LSPLTL).

The protein belongs to the RNA methyltransferase RlmH family. Homodimer.

It is found in the cytoplasm. The enzyme catalyses pseudouridine(1915) in 23S rRNA + S-adenosyl-L-methionine = N(3)-methylpseudouridine(1915) in 23S rRNA + S-adenosyl-L-homocysteine + H(+). In terms of biological role, specifically methylates the pseudouridine at position 1915 (m3Psi1915) in 23S rRNA. This is Ribosomal RNA large subunit methyltransferase H from Ectopseudomonas mendocina (strain ymp) (Pseudomonas mendocina).